Reading from the N-terminus, the 274-residue chain is Eukaryotic translation initiation factor 3 subunit G-2 (274 aa).

The 79-residue stretch at 194–272 (SAVRISNLSE…LILCVEWSKP (79 aa)) folds into the RRM domain.

The protein belongs to the eIF-3 subunit G family. As to quaternary structure, component of the eukaryotic translation initiation factor 3 (eIF-3) complex. The eIF-3 complex interacts with pix.

Its subcellular location is the cytoplasm. In terms of biological role, RNA-binding component of the eukaryotic translation initiation factor 3 (eIF-3) complex, which is involved in protein synthesis of a specialized repertoire of mRNAs and, together with other initiation factors, stimulates binding of mRNA and methionyl-tRNAi to the 40S ribosome. The eIF-3 complex specifically targets and initiates translation of a subset of mRNAs involved in cell proliferation. This subunit can bind 18S rRNA. This is Eukaryotic translation initiation factor 3 subunit G-2 from Drosophila pseudoobscura pseudoobscura (Fruit fly).